The following is a 334-amino-acid chain: DGAT1/2-independent enzyme synthesizing storage lipids (334 aa).

The Lumenal portion of the chain corresponds to 1-50 (MTNKNQSFGVGQDSMSSMTCLIHVLEAWFGVEHLEDYWNFANYLLWVFTP). N-linked (GlcNAc...) asparagine glycosylation occurs at N5. Residues 51–71 (LLLLILPYFTIFLLYLTIIFL) traverse the membrane as a helical segment. Topologically, residues 72 to 125 (HIYKRKNVLKEAYSHNLWDGARKTVATLWDGHAAVWHGYEVHGMEKIPEEGPAL) are cytoplasmic. Residues 126–146 (IIFYHGAIPIDFYYFMAKIFI) form a helical membrane-spanning segment. H130 is a catalytic residue. Topologically, residues 147–334 (HKGRTCRVVA…NKQKINQKTL (188 aa)) are lumenal.

This sequence belongs to the diacylglycerol acyltransferase family. Highly divergent.

The protein resides in the endoplasmic reticulum membrane. It catalyses the reaction a 1,2-diacylglycerol + a 1,2-diacyl-sn-glycero-3-phosphocholine = a triacylglycerol + a 1-acyl-sn-glycero-3-phosphocholine. The catalysed reaction is a 1-O-alkyl-2-acyl-sn-glycero-3-phosphocholine + a 1,2-diacylglycerol = a 1-O-alkyl-sn-glycero-3-phosphocholine + a triacylglycerol. The enzyme catalyses a 2-acylglycerol + an acyl-CoA = a 1,2-diacylglycerol + CoA. It carries out the reaction an acyl-CoA + a 1,2-diacyl-sn-glycerol = a triacyl-sn-glycerol + CoA. It catalyses the reaction 2-(9Z-octadecenoyl)-glycerol + (9Z)-octadecenoyl-CoA = 1,2-di-(9Z-octadecenoyl)-glycerol + CoA. The catalysed reaction is 1,2-di-(9Z-octadecenoyl)-sn-glycerol + (9Z)-octadecenoyl-CoA = 1,2,3-tri-(9Z-octadecenoyl)-glycerol + CoA. Its activity is regulated as follows. Acyltransferase activity is specifically inhibited by TMX1 at the endoplasmic reticulum, restricting accumulation of triacylglycerol. Catalytic subunit of the alternative triglyceride biosynthesis pathway, which mediates formation of triacylglycerol from diacylglycerol and membrane phospholipids. Synthesizes triacylglycerol at the expense of membrane phospholipids, such as phosphatidylcholine (PC) and its ether-linked form (ePC), thereby altering the composition of membranes. The alternative triglyceride biosynthesis pathway is probably required to provide the energy required for rapid growth when fuel sources are limiting. It maintains mitochondrial function during periods of extracellular lipid starvation. Can also use acyl-CoA as donor: acts as a acyl-CoA:monoacylglycerol acyltransferase (MGAT), but also shows acyl-CoA:diacylglycerol acyltransferase (DGAT) activity. In Bos taurus (Bovine), this protein is DGAT1/2-independent enzyme synthesizing storage lipids (TMEM68).